Consider the following 292-residue polypeptide: 4-hydroxy-tetrahydrodipicolinate synthase (292 aa).

Thr-45 contributes to the pyruvate binding site. Tyr-133 serves as the catalytic Proton donor/acceptor. Catalysis depends on Lys-161, which acts as the Schiff-base intermediate with substrate. Position 203 (Ile-203) interacts with pyruvate.

The protein belongs to the DapA family. In terms of assembly, homotetramer; dimer of dimers.

It is found in the cytoplasm. The catalysed reaction is L-aspartate 4-semialdehyde + pyruvate = (2S,4S)-4-hydroxy-2,3,4,5-tetrahydrodipicolinate + H2O + H(+). It functions in the pathway amino-acid biosynthesis; L-lysine biosynthesis via DAP pathway; (S)-tetrahydrodipicolinate from L-aspartate: step 3/4. Catalyzes the condensation of (S)-aspartate-beta-semialdehyde [(S)-ASA] and pyruvate to 4-hydroxy-tetrahydrodipicolinate (HTPA). The chain is 4-hydroxy-tetrahydrodipicolinate synthase from Nitrosomonas europaea (strain ATCC 19718 / CIP 103999 / KCTC 2705 / NBRC 14298).